A 151-amino-acid chain; its full sequence is D-aminoacyl-tRNA deacylase (151 aa).

The Gly-cisPro motif, important for rejection of L-amino acids motif lies at 136 to 137; it reads GP.

The protein belongs to the DTD family. In terms of assembly, homodimer.

Its subcellular location is the cytoplasm. The enzyme catalyses glycyl-tRNA(Ala) + H2O = tRNA(Ala) + glycine + H(+). It catalyses the reaction a D-aminoacyl-tRNA + H2O = a tRNA + a D-alpha-amino acid + H(+). An aminoacyl-tRNA editing enzyme that deacylates mischarged D-aminoacyl-tRNAs. Also deacylates mischarged glycyl-tRNA(Ala), protecting cells against glycine mischarging by AlaRS. Acts via tRNA-based rather than protein-based catalysis; rejects L-amino acids rather than detecting D-amino acids in the active site. By recycling D-aminoacyl-tRNA to D-amino acids and free tRNA molecules, this enzyme counteracts the toxicity associated with the formation of D-aminoacyl-tRNA entities in vivo and helps enforce protein L-homochirality. The sequence is that of D-aminoacyl-tRNA deacylase from Streptococcus gordonii (strain Challis / ATCC 35105 / BCRC 15272 / CH1 / DL1 / V288).